Reading from the N-terminus, the 4486-residue chain is Dynein axonemal heavy chain 9 (4486 aa).

The stem stretch occupies residues 1-1831; sequence MRLAEERAAL…FANICDAQFL (1831 aa). Coiled-coil stretches lie at residues 381 to 410, 504 to 529, 639 to 662, 752 to 823, and 1326 to 1355; these read DLLR…EFQD, QSTD…LGTI, AEGK…ETRL, TLLE…TWVT, and NINV…AWDA. 4 AAA regions span residues 1832–2053, 2113–2334, 2440–2688, and 2787–3036; these read YSYE…VLVV, ALVR…TRFK, EFDP…IFQG, and NHNE…EQRY. Residues 1870–1877, 2151–2158, 2478–2485, and 2825–2832 contribute to the ATP site; these read GPAGTGKT, GGAGTGKS, GTAGTGKS, and GVGGSGKQ. Coiled-coil stretches lie at residues 3051 to 3154, 3285 to 3341, and 3640 to 3675; these read YQSL…AKAE, KRQA…AEVT, and LVEN…REHY. A stalk region spans residues 3051–3341; the sequence is YQSLLHRHRK…LKCQQEAEVT (291 aa). 2 AAA regions span residues 3429–3656 and 3866–4092; these read LMDD…EVEK and LRDF…VLYN.

Belongs to the dynein heavy chain family. As to quaternary structure, consists of at least two heavy chains and a number of intermediate and light chains. Interacts with ODAD1. Expressed in upper and lower respiratory airway epithelia (at protein level). Not detected in spermatozoa (at protein level).

It localises to the cytoplasm. The protein resides in the cytoskeleton. It is found in the cilium axoneme. Force generating protein required for cilia beating in respiratory epithelia. Produces force towards the minus ends of microtubules. Dynein has ATPase activity; the force-producing power stroke is thought to occur on release of ADP. This chain is Dynein axonemal heavy chain 9, found in Homo sapiens (Human).